We begin with the raw amino-acid sequence, 957 residues long: Calsyntenin-3 (957 aa).

The N-terminal stretch at Met1–Cys19 is a signal peptide. Over Asn20 to Ala848 the chain is Extracellular. 2 consecutive Cadherin domains span residues Ile29 to Phe145 and Val146 to Trp246. Residues Asn299, Asn347, and Asn508 are each glycosylated (N-linked (GlcNAc...) asparagine). Residues Ala849 to Val869 form a helical membrane-spanning segment. The Cytoplasmic segment spans residues Arg870–Tyr957. Residues Cys919–Tyr957 are disordered. A compositionally biased stretch (acidic residues) spans Gln928–Ala938. Residues Ser944 to Tyr957 show a composition bias toward basic and acidic residues.

This sequence belongs to the calsyntenin family. In terms of assembly, interacts (via cadherin domains) with both alpha and beta isoforms of neurexins (NRXN1, NRXN2 and NRXN3). Directly interacts with APBA2. Forms a tripartite complex with APBA2 and APP. Interacts with low affinity with KLC1. Interacts with SLC23A2/SVCT2. Proteolytically processed under normal cellular conditions. A primary zeta-cleavage generates a large extracellular (soluble) N-terminal domain (sAlc) and a short C-terminal transmembrane fragment (CTF1). A secondary cleavage catalyzed by gamma-secretase within the transmembrane domain releases the beta-Alc-beta chain in the extracellular milieu and produces an intracellular fragment (AlcICD). This processing is strongly suppressed in the tripartite complex formed with APBA2 and APP, which seems to prevent the association with gamma-secretase.

It is found in the postsynaptic cell membrane. The protein resides in the endoplasmic reticulum membrane. It localises to the golgi apparatus membrane. The protein localises to the cell projection. Its subcellular location is the dendrite. Functionally, postsynaptic adhesion molecule that binds to presynaptic neurexins to mediate both excitatory and inhibitory synapse formation. Promotes synapse development by acting as a cell adhesion molecule at the postsynaptic membrane, which associates with both neurexin-alpha and neurexin-beta proteins at the presynaptic membrane. Regulates the balance between excitatory and inhibitory synapses by inhibiting formation of excitatory parallel-fiber synapses and promoting formation of inhibitory synapses in the same neuron. May also be involved in ascorbate (vitamin C) uptake via its interaction with SLC23A2/SVCT2. Complex formation with APBA2 and APP, stabilizes APP metabolism and enhances APBA2-mediated suppression of beta-APP40 secretion, due to the retardation of intracellular APP maturation. The polypeptide is Calsyntenin-3 (CLSTN3) (Bos taurus (Bovine)).